The following is a 175-amino-acid chain: Adenine phosphoribosyltransferase (175 aa).

The protein belongs to the purine/pyrimidine phosphoribosyltransferase family. As to quaternary structure, homodimer.

The protein resides in the cytoplasm. It carries out the reaction AMP + diphosphate = 5-phospho-alpha-D-ribose 1-diphosphate + adenine. The protein operates within purine metabolism; AMP biosynthesis via salvage pathway; AMP from adenine: step 1/1. Its function is as follows. Catalyzes a salvage reaction resulting in the formation of AMP, that is energically less costly than de novo synthesis. This chain is Adenine phosphoribosyltransferase, found in Pelagibacter ubique (strain HTCC1062).